A 506-amino-acid chain; its full sequence is MSTANNNSESTESVSMNAFKQPKAFYLIFSIELWERFGYYGLQGIMAVYLVKMLGMSETDSITLFSSFSALVYGFVAIGGWLGDKVLGTKRVIVLGAIVLAIGYTMIAYSGHSVAWVYIGMATIAVGNGLFKANPSALLSTCYAKDDPRLDGAFTMYYMAVNIGSFFSMLATPVLAANYGWSVAFSLSVVGMILTLVNFMFCRKWVSTQGSQPDFQPINLKKLVITLAGIVVLVALSTWLLHNQGVARWILTIISLAVVAIFIKEMLAVSGAERRKMIVALLLMLEAVVFFVLYNQMPTSLNFFAIRNVEHSILGFAFEPEQYQALNPFWIMVASPLLAAVYNKMGDQLPMAHKFAIGMVLCSGAFLVLPWGASMANEQGIVSVNWLILCYGLQSIGELMISGLGLAMVAQLVPQRLMGFIMGAWFLTSAGAAIIAGYVANMMAVPENVVDPHVSLEVYSNVFMQIGIVTGIIAVLMMLTAPKLTRMTQDVATDVPADAATTTASA.

Residues 1 to 36 are Cytoplasmic-facing; the sequence is MSTANNNSESTESVSMNAFKQPKAFYLIFSIELWER. The chain crosses the membrane as a helical span at residues 37-57; sequence FGYYGLQGIMAVYLVKMLGMS. Residues 58 to 61 lie on the Periplasmic side of the membrane; the sequence is ETDS. Residues 62–82 traverse the membrane as a helical segment; it reads ITLFSSFSALVYGFVAIGGWL. Residues 83–91 are Cytoplasmic-facing; that stretch reads GDKVLGTKR. The next 2 membrane-spanning stretches (helical) occupy residues 92–112 and 113–133; these read VIVL…YSGH and SVAW…LFKA. The Cytoplasmic portion of the chain corresponds to 134–155; the sequence is NPSALLSTCYAKDDPRLDGAFT. The chain crosses the membrane as a helical span at residues 156 to 176; it reads MYYMAVNIGSFFSMLATPVLA. At 177 to 180 the chain is on the periplasmic side; that stretch reads ANYG. Residues 181 to 201 form a helical membrane-spanning segment; the sequence is WSVAFSLSVVGMILTLVNFMF. Topologically, residues 202 to 222 are cytoplasmic; it reads CRKWVSTQGSQPDFQPINLKK. A helical transmembrane segment spans residues 223–243; that stretch reads LVITLAGIVVLVALSTWLLHN. Over 244–248 the chain is Periplasmic; the sequence is QGVAR. The chain crosses the membrane as a helical span at residues 249–269; the sequence is WILTIISLAVVAIFIKEMLAV. At 270–276 the chain is on the cytoplasmic side; it reads SGAERRK. Residues 277–297 form a helical membrane-spanning segment; sequence MIVALLLMLEAVVFFVLYNQM. Residues 298–322 lie on the Periplasmic side of the membrane; sequence PTSLNFFAIRNVEHSILGFAFEPEQ. Residues 323–343 traverse the membrane as a helical segment; sequence YQALNPFWIMVASPLLAAVYN. The Cytoplasmic portion of the chain corresponds to 344–354; the sequence is KMGDQLPMAHK. Residues 355–375 traverse the membrane as a helical segment; sequence FAIGMVLCSGAFLVLPWGASM. The Periplasmic portion of the chain corresponds to 376–385; the sequence is ANEQGIVSVN. A helical membrane pass occupies residues 386–406; the sequence is WLILCYGLQSIGELMISGLGL. Over 407–416 the chain is Cytoplasmic; it reads AMVAQLVPQR. Residues 417 to 437 form a helical membrane-spanning segment; sequence LMGFIMGAWFLTSAGAAIIAG. At 438 to 461 the chain is on the periplasmic side; that stretch reads YVANMMAVPENVVDPHVSLEVYSN. A helical membrane pass occupies residues 462-482; that stretch reads VFMQIGIVTGIIAVLMMLTAP. Topologically, residues 483-506 are cytoplasmic; the sequence is KLTRMTQDVATDVPADAATTTASA.

The protein belongs to the major facilitator superfamily. Proton-dependent oligopeptide transporter (POT/PTR) (TC 2.A.17) family. DtpA subfamily.

It localises to the cell inner membrane. Proton-dependent permease that transports di- and tripeptides. This is Dipeptide and tripeptide permease A from Pectobacterium carotovorum subsp. carotovorum (strain PC1).